The chain runs to 388 residues: Mannitol-1-phosphate 5-dehydrogenase (388 aa).

Position 5–16 (5–16 (AVHFGGGNIGRG)) interacts with NAD(+). K213 is a catalytic residue.

This sequence belongs to the mannitol dehydrogenase family. In terms of assembly, monomer.

It catalyses the reaction D-mannitol 1-phosphate + NAD(+) = beta-D-fructose 6-phosphate + NADH + H(+). In terms of biological role, catalyzes the NAD(H)-dependent interconversion of D-fructose 6-phosphate and D-mannitol 1-phosphate in the mannitol metabolic pathway. The protein is Mannitol-1-phosphate 5-dehydrogenase of Penicillium rubens (strain ATCC 28089 / DSM 1075 / NRRL 1951 / Wisconsin 54-1255) (Penicillium chrysogenum).